Consider the following 125-residue polypeptide: Large ribosomal subunit protein eL31 (125 aa).

This sequence belongs to the eukaryotic ribosomal protein eL31 family. In terms of assembly, component of the large ribosomal subunit.

It is found in the cytoplasm. Functionally, component of the large ribosomal subunit. The ribosome is a large ribonucleoprotein complex responsible for the synthesis of proteins in the cell. The sequence is that of Large ribosomal subunit protein eL31 (rpl31) from Xenopus laevis (African clawed frog).